The primary structure comprises 672 residues: Iron-phytosiderophore transporter YSL15 (672 aa).

The span at 1 to 11 (MEHADADRTRV) shows a compositional bias: basic and acidic residues. A disordered region spans residues 1–27 (MEHADADRTRVAPEIGSLHDEDAEADP). 14 consecutive transmembrane segments (helical) span residues 47–67 (GVVA…KIAL), 70–90 (GLVP…LRGW), 115–135 (CAVA…LLGL), 158–178 (GIGW…LSLI), 218–238 (LHGF…QWFY), 279–299 (LVNL…WPLI), 325–345 (FLCI…VTGV), 390–410 (MAYS…PIMF), 418–438 (VIIA…GAGL), 450–470 (IALF…AGLV), 504–524 (VGEL…FMLF), 556–576 (ISAL…FAVL), 602–622 (FLVG…LFAW), and 630–650 (AAFM…IWTF).

This sequence belongs to the YSL (TC 2.A.67.2) family. Expressed in root phloem and at low levels in the shoot companion cells.

The protein localises to the cell membrane. Its function is as follows. Involved in Fe(3+) uptake from the rhizosphere and phloem transport of iron. Plays an important role in iron homeostasis during the early stages of growth. Transports Fe(3+)-phytosiderophore, but not Fe(3+)- or Fe(2+)-nicotianamine. May not transport other chelated metals. The sequence is that of Iron-phytosiderophore transporter YSL15 (YSL15) from Oryza sativa subsp. japonica (Rice).